Here is a 98-residue protein sequence, read N- to C-terminus: Cell division topological specificity factor (98 aa).

Belongs to the MinE family.

In terms of biological role, prevents the cell division inhibition by proteins MinC and MinD at internal division sites while permitting inhibition at polar sites. This ensures cell division at the proper site by restricting the formation of a division septum at the midpoint of the long axis of the cell. The protein is Cell division topological specificity factor of Nitrosomonas eutropha (strain DSM 101675 / C91 / Nm57).